A 154-amino-acid chain; its full sequence is Protein X (154 aa).

Residues 68–117 (PCALRFTSARCMETTVNAHQILPKVLHKRTLGLPAMSTTDLEAYFKDCVF) form a mitochondrial targeting sequence region.

It belongs to the orthohepadnavirus protein X family. In terms of assembly, may form homodimer. May interact with host CEBPA, CFLAR, CREB1, DDB1, E4F1, HBXIP, HSPD1/HSP60, NFKBIA, POLR2E and SMAD4. Interacts with host SMC5-SMC6 complex and induces its degradation. Interacts with host TRPC4AP; leading to prevent ubiquitination of TRPC4AP. Interacts with host PLSCR1; this interaction promotes ubiquitination and degradation of HBx and impairs HBx-mediated cell proliferation. Post-translationally, a fraction may be phosphorylated in insect cells and HepG2 cells, a human hepatoblastoma cell line. Phosphorylated in vitro by host protein kinase C or mitogen-activated protein kinase. N-acetylated in insect cells.

The protein localises to the host cytoplasm. Its subcellular location is the host nucleus. It is found in the host mitochondrion. Its function is as follows. Multifunctional protein that plays a role in silencing host antiviral defenses and promoting viral transcription. Does not seem to be essential for HBV infection. May be directly involved in development of cirrhosis and liver cancer (hepatocellular carcinoma). Most of cytosolic activities involve modulation of cytosolic calcium. The effect on apoptosis is controversial depending on the cell types in which the studies have been conducted. May induce apoptosis by localizing in mitochondria and causing loss of mitochondrial membrane potential. May also modulate apoptosis by binding host CFLAR, a key regulator of the death-inducing signaling complex (DISC). Promotes viral transcription by using the host E3 ubiquitin ligase DDB1 to target the SMC5-SMC6 complex to proteasomal degradation. This host complex would otherwise bind to viral episomal DNA, and prevents its transcription. Moderately stimulates transcription of many different viral and cellular transcription elements. Promoters and enhancers stimulated by HBx contain DNA binding sites for NF-kappa-B, AP-1, AP-2, c-EBP, ATF/CREB, or the calcium-activated factor NF-AT. This is Protein X from Homo sapiens (Human).